The primary structure comprises 809 residues: Carbon monoxide dehydrogenase large chain (809 aa).

Cys-388 is a binding site for Cu(+). Residue Glu-763 participates in Mo-molybdopterin cytosine dinucleotide binding.

As to quaternary structure, dimer of heterotrimers. Each heterotrimer consists of a large, a medium and a small subunit. Requires Cu(+) as cofactor. The cofactor is Mo-molybdopterin cytosine dinucleotide.

It carries out the reaction CO + a quinone + H2O = a quinol + CO2. Its function is as follows. Catalyzes the oxidation of carbon monoxide to carbon dioxide. The polypeptide is Carbon monoxide dehydrogenase large chain (coxL) (Afipia carboxidovorans (strain ATCC 49405 / DSM 1227 / KCTC 32145 / OM5) (Oligotropha carboxidovorans)).